We begin with the raw amino-acid sequence, 188 residues long: MASTNDLKNGLVLKLEGGQLWSVVEFQHVKPGKGPAFVRTKLKNVLSGKVVDKTFNAGVKVETATVDKRDMQFSYMDGDYFVFMDMETYDQLMIDRKVVGDAANFLVEGFEATVAQHEGEVLFVELPAAVELTIQETEPGVQGDRSTGGTKPATLETGHQINVPLFITTGEKIKVDTRTSDYLGRVNS.

The protein belongs to the elongation factor P family.

It is found in the cytoplasm. It functions in the pathway protein biosynthesis; polypeptide chain elongation. Its function is as follows. Involved in peptide bond synthesis. Stimulates efficient translation and peptide-bond synthesis on native or reconstituted 70S ribosomes in vitro. Probably functions indirectly by altering the affinity of the ribosome for aminoacyl-tRNA, thus increasing their reactivity as acceptors for peptidyl transferase. The sequence is that of Elongation factor P from Streptomyces coelicolor (strain ATCC BAA-471 / A3(2) / M145).